Consider the following 786-residue polypeptide: LPS-assembly protein LptD (786 aa).

An N-terminal signal peptide occupies residues 1-39; sequence MPPKPLFPNVFPGDGAPRKRRLALALLAVPGLVPAVSYA.

It belongs to the LptD family. In terms of assembly, component of the lipopolysaccharide transport and assembly complex. Interacts with LptE and LptA.

It is found in the cell outer membrane. Its function is as follows. Together with LptE, is involved in the assembly of lipopolysaccharide (LPS) at the surface of the outer membrane. In Burkholderia ambifaria (strain ATCC BAA-244 / DSM 16087 / CCUG 44356 / LMG 19182 / AMMD) (Burkholderia cepacia (strain AMMD)), this protein is LPS-assembly protein LptD.